The primary structure comprises 151 residues: Deoxyuridine 5'-triphosphate nucleotidohydrolase (151 aa).

Substrate is bound by residues 70–72, N83, 87–89, and M97; these read RSG and LID.

This sequence belongs to the dUTPase family. The cofactor is Mg(2+).

It catalyses the reaction dUTP + H2O = dUMP + diphosphate + H(+). The protein operates within pyrimidine metabolism; dUMP biosynthesis; dUMP from dCTP (dUTP route): step 2/2. Its function is as follows. This enzyme is involved in nucleotide metabolism: it produces dUMP, the immediate precursor of thymidine nucleotides and it decreases the intracellular concentration of dUTP so that uracil cannot be incorporated into DNA. The protein is Deoxyuridine 5'-triphosphate nucleotidohydrolase of Azotobacter vinelandii (strain DJ / ATCC BAA-1303).